Consider the following 533-residue polypeptide: Zinc finger protein 26 (533 aa).

The KRAB domain occupies 14 to 85 (LSFKDISMEF…NAKISRQSCP (72 aa)). C2H2-type zinc fingers lie at residues 174–196 (CVCS…LRIH), 202–224 (YECS…QRVH), 230–252 (YSCS…QEIH), 258–280 (YGCS…QRSH), 286–308 (YECS…QRTH), 314–336 (HKCS…IRMH), 342–364 (YQCS…QGVH), 370–392 (YQCG…LRAH), 398–420 (YGCS…RRTH), 426–448 (YECS…QRTH), 454–476 (YECN…QKTH), 482–504 (FKCS…QRVH), and 510–532 (WKCS…RKTH).

Belongs to the krueppel C2H2-type zinc-finger protein family.

Its subcellular location is the nucleus. Its function is as follows. May be involved in transcriptional regulation. The protein is Zinc finger protein 26 (ZNF26) of Homo sapiens (Human).